Consider the following 634-residue polypeptide: Probable sulfate transporter 3.5 (634 aa).

Residues 1-12 are compositionally biased toward polar residues; sequence MENTITSSTSSP. Residues 1–25 form a disordered region; that stretch reads MENTITSSTSSPKGRGVNFSTPRGF. The Cytoplasmic portion of the chain corresponds to 1 to 81; that stretch reads MENTITSSTS…KYDMQKLKYD (81 aa). The chain crosses the membrane as a helical span at residues 82–102; that stretch reads VLAGITITSLAVPQGISYAKL. Topologically, residues 103–104 are extracellular; sequence AS. The helical transmembrane segment at 105–125 threads the bilayer; that stretch reads IPPIIGLYSSFVPPFVYAVFG. Residues 126 to 130 lie on the Cytoplasmic side of the membrane; that stretch reads SSNNL. The helical transmembrane segment at 131 to 151 threads the bilayer; the sequence is AVGTVAACSLLIAETFGEEMI. Residues 152–158 are Extracellular-facing; sequence KNEPELY. A helical membrane pass occupies residues 159 to 179; that stretch reads LHLIFTATLITGLFQFAMGFL. Residues 180 to 195 are Cytoplasmic-facing; sequence RLGILVDFLSHSTITG. A helical transmembrane segment spans residues 196–216; the sequence is FMGGTAIIILLQQLKGIFGLV. The Extracellular portion of the chain corresponds to 217–239; it reads HFTHKTDVVSVLHSILDNRAEWK. The chain crosses the membrane as a helical span at residues 240–260; that stretch reads WQSTLAGVCFLVFLQSTRYIK. The Cytoplasmic segment spans residues 261–265; it reads QRYPK. Residues 266-286 traverse the membrane as a helical segment; sequence LFWVSAMGPMVVVVVGCVVAY. The Extracellular segment spans residues 287 to 321; that stretch reads LVKGTAHGIATVGPLKKGLNPPSIQLLNFDSKYLG. Residues 322–342 form a helical membrane-spanning segment; that stretch reads MVFKAGIVTGLIALAEGIAIG. The Cytoplasmic segment spans residues 343 to 358; the sequence is RSFAVMKNEQTDGNKE. A helical membrane pass occupies residues 359-379; sequence MIAFGLMNVIGSFTSCYLTTG. Over 380 to 395 the chain is Extracellular; it reads PFSKTAVNYNAGTKTP. The helical transmembrane segment at 396-416 threads the bilayer; it reads MSNVVMGVCMMLVLLFLAPLF. At 417 to 420 the chain is on the cytoplasmic side; it reads SYTP. The helical transmembrane segment at 421-441 threads the bilayer; sequence LVGLSAIIMSAMLGLINYEEM. The Extracellular segment spans residues 442–458; the sequence is YHLFKVDKFDFLVCMSA. A helical transmembrane segment spans residues 459 to 479; the sequence is FFGVSFLSMDYGLIISVGFSI. Over 480 to 634 the chain is Cytoplasmic; that stretch reads VRALLYVARP…FNLTTTKPEV (155 aa). The STAS domain maps to 508-623; the sequence is QYPASEEMLG…LSIDDAVQAC (116 aa).

Belongs to the SLC26A/SulP transporter (TC 2.A.53) family.

It is found in the membrane. In terms of biological role, h(+)/sulfate cotransporter that may play a role in the regulation of sulfate assimilation. This Arabidopsis thaliana (Mouse-ear cress) protein is Probable sulfate transporter 3.5 (SULTR3;5).